The primary structure comprises 1046 residues: Translation initiation factor IF-2 (1046 aa).

Residues 49–450 (ALQQGNGGKA…GVMLPRGNGQ (402 aa)) are disordered. Low complexity-rich tracts occupy residues 57–80 (KAAP…ARPA) and 89–106 (PAAA…AAPA). Over residues 107 to 128 (APGPRPGPKPAPRPAPAAPAPA) the composition is skewed to pro residues. Low complexity predominate over residues 129 to 169 (APEFTAPPSAPAAPAAAASGPRPGARPGAPKPGGARPATPG). Residues 177–194 (RGERTDRGDRGDRGDRQG) show a composition bias toward basic and acidic residues. The span at 195–214 (AARPGGQAPRPGARPAGPRP) shows a compositional bias: low complexity. 2 stretches are compositionally biased toward gly residues: residues 239–248 (PRPGGAGAPG) and 266–280 (GGPG…GPGG). The span at 302 to 318 (GNRPNPGMMPQRPAAGP) shows a compositional bias: low complexity. Positions 319-414 (RPGGGGPGGR…GTQGAFGRPG (96 aa)) are enriched in gly residues. Residues 418–427 (RRGRKSKRQR) show a composition bias toward basic residues. In terms of domain architecture, tr-type G spans 539 to 711 (ARPPVVTVMG…VVLTADASLD (173 aa)). A G1 region spans residues 548-555 (GHVDHGKT). 548–555 (GHVDHGKT) is a GTP binding site. Positions 573–577 (GITQH) are G2. A G3 region spans residues 598 to 601 (DTPG). GTP contacts are provided by residues 598–602 (DTPGH) and 652–655 (NKID). Positions 652–655 (NKID) are G4. Residues 688–690 (SAK) are G5.

This sequence belongs to the TRAFAC class translation factor GTPase superfamily. Classic translation factor GTPase family. IF-2 subfamily.

It is found in the cytoplasm. Functionally, one of the essential components for the initiation of protein synthesis. Protects formylmethionyl-tRNA from spontaneous hydrolysis and promotes its binding to the 30S ribosomal subunits. Also involved in the hydrolysis of GTP during the formation of the 70S ribosomal complex. The polypeptide is Translation initiation factor IF-2 (Streptomyces avermitilis (strain ATCC 31267 / DSM 46492 / JCM 5070 / NBRC 14893 / NCIMB 12804 / NRRL 8165 / MA-4680)).